The sequence spans 609 residues: Glutamine--fructose-6-phosphate aminotransferase [isomerizing] (609 aa).

The active-site Nucleophile; for GATase activity is cysteine 2. Residues 2 to 217 (CGIVGYIGRR…EGWLAELTPE (216 aa)) form the Glutamine amidotransferase type-2 domain. 2 consecutive SIS domains span residues 286–425 (SAAE…QNGR) and 458–599 (AAEA…VDKP). The For Fru-6P isomerization activity role is filled by lysine 604.

Homodimer.

It localises to the cytoplasm. It catalyses the reaction D-fructose 6-phosphate + L-glutamine = D-glucosamine 6-phosphate + L-glutamate. Functionally, catalyzes the first step in hexosamine metabolism, converting fructose-6P into glucosamine-6P using glutamine as a nitrogen source. The protein is Glutamine--fructose-6-phosphate aminotransferase [isomerizing] of Symbiobacterium thermophilum (strain DSM 24528 / JCM 14929 / IAM 14863 / T).